A 398-amino-acid polypeptide reads, in one-letter code: E3 ubiquitin-protein ligase RSL1 (398 aa).

The segment at 155 to 374 (QKETCNICLN…LDLTQCCGSC (220 aa)) is TRIAD supradomain. Residues C159, C162, C183, C186, C246, C251, C271, C274, C279, C282, H287, C292, C321, and C324 each contribute to the Zn(2+) site. Residues 159 to 207 (CNICLNDDINADQMFSVDKSGHMCCSECVKRHIEVRLLEGSLITCPHYR) form an RING-type 3; degenerate zinc finger. Residues 159–208 (CNICLNDDINADQMFSVDKSGHMCCSECVKRHIEVRLLEGSLITCPHYRC) form an RING-type 1 zinc finger. An IBR-type zinc finger spans residues 233–292 (TKDELIPVMDRVYCPNPRCSTLMSETELSGLNIGVRRCCVKCGEPFCVKCKVSWHNNLSC). Residues 321–349 (CSKCKHMIELSSGCISVVCRCGHTFCYQC) form an RING-type 2; atypical zinc finger. Residues 321–356 (CSKCKHMIELSSGCISVVCRCGHTFCYQCGADAGDC) form an RING-type 4; degenerate zinc finger. C334 is a catalytic residue. Zn(2+)-binding residues include C339, C341, C346, C349, H358, and C370. A helical transmembrane segment spans residues 374–394 (CCCFVFFLVIIAIVVTIILLV).

It belongs to the RBR family. In terms of assembly, interacts with the PYL4 and PYR1 ABA receptors at the plasma membrane. It depends on Zn(2+) as a cofactor.

Its subcellular location is the cell membrane. The protein localises to the vacuole membrane. The enzyme catalyses [E2 ubiquitin-conjugating enzyme]-S-ubiquitinyl-L-cysteine + [acceptor protein]-L-lysine = [E2 ubiquitin-conjugating enzyme]-L-cysteine + [acceptor protein]-N(6)-ubiquitinyl-L-lysine.. Its pathway is protein modification; protein ubiquitination. In terms of biological role, acts as an E3 ubiquitin-protein ligase, or as part of E3 complex, which accepts ubiquitin from specific E2 ubiquitin-conjugating enzymes and then transfers it to substrates. Negative regulator of the abscisic acid (ABA) signaling pathway which targets PYL4 and PYR1 ABA receptors in plasma membrane to promote their FREE1/FYVE1-dependent trafficking and degradation upon ubiquitynation; this process involves clathrin-mediated endocytosis and trafficking through the ESCRT pathway. Involved in the maintenance of seed longevity. May enhance gibberellins responses. In Arabidopsis thaliana (Mouse-ear cress), this protein is E3 ubiquitin-protein ligase RSL1.